Here is a 368-residue protein sequence, read N- to C-terminus: Glutamate 5-kinase (368 aa).

Position 13 (lysine 13) interacts with ATP. Serine 54, aspartate 141, and asparagine 153 together coordinate substrate. An ATP-binding site is contributed by 173–174; that stretch reads SD. Positions 278-355 constitute a PUA domain; the sequence is KGSLRLDAGA…DEIPEILGYP (78 aa).

This sequence belongs to the glutamate 5-kinase family.

It is found in the cytoplasm. It catalyses the reaction L-glutamate + ATP = L-glutamyl 5-phosphate + ADP. It functions in the pathway amino-acid biosynthesis; L-proline biosynthesis; L-glutamate 5-semialdehyde from L-glutamate: step 1/2. Catalyzes the transfer of a phosphate group to glutamate to form L-glutamate 5-phosphate. In Jannaschia sp. (strain CCS1), this protein is Glutamate 5-kinase.